The primary structure comprises 212 residues: Large ribosomal subunit protein uL3 (212 aa).

Residues 135–161 form a disordered region; it reads MTHGNSLSHRAPGSIGQNQSPGKVFKG. Glutamine 153 carries the N5-methylglutamine modification.

It belongs to the universal ribosomal protein uL3 family. Part of the 50S ribosomal subunit. Forms a cluster with proteins L14 and L19. In terms of processing, methylated by PrmB.

In terms of biological role, one of the primary rRNA binding proteins, it binds directly near the 3'-end of the 23S rRNA, where it nucleates assembly of the 50S subunit. In Alteromonas mediterranea (strain DSM 17117 / CIP 110805 / LMG 28347 / Deep ecotype), this protein is Large ribosomal subunit protein uL3.